Here is a 103-residue protein sequence, read N- to C-terminus: MSGRGKGGKGLGKGGAKRHRKILRDNIQGITKPAIRRLARRGGVKRISGLIYEDVRAVLKSFLESVIRDAVTYTEHAKRKTVTSLDVVYALKRQGRTLYGFGG.

Residues 1 to 14 are compositionally biased toward gly residues; that stretch reads MSGRGKGGKGLGKG. Residues 1–20 form a disordered region; that stretch reads MSGRGKGGKGLGKGGAKRHR. Residue K6 is modified to N6-acetyl-N6-methyllysine; alternate. 3 positions are modified to N6-methyllysine; alternate: K6, K9, and K13. K13 carries the N6-acetyl-N6-methyllysine; alternate modification. A DNA-binding region spans residues 17–21; the sequence is KRHRK. K92 bears the N6-glutaryllysine mark.

Belongs to the histone H4 family. The nucleosome is a histone octamer containing two molecules each of H2A, H2B, H3 and H4 assembled in one H3-H4 heterotetramer and two H2A-H2B heterodimers. The octamer wraps approximately 147 bp of DNA. Glutarylation at Lys-92 (H4K91glu) destabilizes nucleosomes by promoting dissociation of the H2A-H2B dimers from nucleosomes.

Its subcellular location is the nucleus. It is found in the chromosome. Its function is as follows. Core component of nucleosome. Nucleosomes wrap and compact DNA into chromatin, limiting DNA accessibility to the cellular machineries which require DNA as a template. Histones thereby play a central role in transcription regulation, DNA repair, DNA replication and chromosomal stability. DNA accessibility is regulated via a complex set of post-translational modifications of histones, also called histone code, and nucleosome remodeling. The sequence is that of Histone H4.1 (HHF1) from Eremothecium gossypii (strain ATCC 10895 / CBS 109.51 / FGSC 9923 / NRRL Y-1056) (Yeast).